Consider the following 148-residue polypeptide: MAVKIKLARIGKIREPHYRIVVADARTRRNGRAIETIGQYHPMEEPSRIEVDSERAQYWLGVGAQPTEPVQNILEITGDWQKFKGLPGAEGTLKTAAPKPSKQELFEAALAAAGEEPVAEATTPKKKGGKKAEAEDKAEEQKSEEGQA.

Positions 111-122 (AAAGEEPVAEAT) are enriched in low complexity. A disordered region spans residues 111-148 (AAAGEEPVAEATTPKKKGGKKAEAEDKAEEQKSEEGQA). The segment covering 130-148 (KKAEAEDKAEEQKSEEGQA) has biased composition (basic and acidic residues).

The protein belongs to the bacterial ribosomal protein bS16 family.

This is Small ribosomal subunit protein bS16 from Saccharopolyspora erythraea (strain ATCC 11635 / DSM 40517 / JCM 4748 / NBRC 13426 / NCIMB 8594 / NRRL 2338).